Consider the following 261-residue polypeptide: Thiamine thiazole synthase (261 aa).

NAD(+) is bound by residues S40, 59–60, G67, V133, and 159–161; these read ER and HVD. Residues D161 and H176 each coordinate Fe cation. NAD(+) contacts are provided by S179 and M226. R236 lines the glycine pocket.

The protein belongs to the THI4 family. In terms of assembly, homooctamer; tetramer of dimers. Fe(2+) serves as cofactor.

The catalysed reaction is hydrogen sulfide + glycine + NAD(+) = ADP-5-ethyl-4-methylthiazole-2-carboxylate + nicotinamide + 3 H2O + H(+). Its pathway is cofactor biosynthesis; thiamine diphosphate biosynthesis. Involved in the biosynthesis of the thiazole moiety of thiamine. Catalyzes the conversion of NAD and glycine to adenosine diphosphate 5-(2-hydroxyethyl)-4-methylthiazole-2-carboxylate (ADT), an adenylated thiazole intermediate, using free sulfide as a source of sulfur. This is Thiamine thiazole synthase from Methanococcus vannielii (strain ATCC 35089 / DSM 1224 / JCM 13029 / OCM 148 / SB).